The primary structure comprises 735 residues: Ion-translocating oxidoreductase complex subunit C (735 aa).

4Fe-4S ferredoxin-type domains are found at residues 368–397 and 407–436; these read MGAPQEEKSCIRCSACADACPADLLPQQLY and KATAHHIADCIECGACAWVCPSNIPLVQYF. The [4Fe-4S] cluster site is built by cysteine 377, cysteine 380, cysteine 383, cysteine 387, cysteine 416, cysteine 419, cysteine 422, and cysteine 426. Residues 534-716 form a disordered region; sequence QARAKQAAHP…ADPRKAAVAA (183 aa).

Belongs to the 4Fe4S bacterial-type ferredoxin family. RnfC subfamily. The complex is composed of six subunits: RsxA, RsxB, RsxC, RsxD, RsxE and RsxG. [4Fe-4S] cluster is required as a cofactor.

It localises to the cell inner membrane. In terms of biological role, part of a membrane-bound complex that couples electron transfer with translocation of ions across the membrane. Required to maintain the reduced state of SoxR. The polypeptide is Ion-translocating oxidoreductase complex subunit C (Salmonella agona (strain SL483)).